Reading from the N-terminus, the 704-residue chain is CAP-Gly domain-containing linker protein 4 (704 aa).

ANK repeat units follow at residues 65–101 (TSVS…NVND), 149–180 (TNMN…DVDA), and 186–215 (NFGT…NPAF). In terms of domain architecture, CAP-Gly 1 spans 303 to 345 (GTTEFASGQWAGIELDEPEGKNNGSVGRVQYFKCAPKYGIFAP). A disordered region spans residues 353–479 (KDGRKTTTHT…SATSAANNSH (127 aa)). Low complexity-rich tracts occupy residues 360-371 (THTPSTRATPHA), 423-432 (SMSSSSSSSS), and 440-461 (PKKL…SLPS). The region spanning 504–546 (GTTNFAPGYWYGIELEKPHGKNDGSVGGVQYFSCSPRYGIFAP) is the CAP-Gly 2 domain. A phosphoserine mark is found at S556 and S608. The 43-residue stretch at 643 to 685 (GPTDFASGIWLGLELRSAKGKNDGAVGDKRYFTCKPNYGVLVR) folds into the CAP-Gly 3 domain.

The chain is CAP-Gly domain-containing linker protein 4 (Clip4) from Mus musculus (Mouse).